Here is a 151-residue protein sequence, read N- to C-terminus: 3-dehydroquinate dehydratase 1 (151 aa).

The active-site Proton acceptor is the tyrosine 24. Asparagine 75, histidine 81, and aspartate 88 together coordinate substrate. The active-site Proton donor is the histidine 101. Substrate contacts are provided by residues 102–103 and arginine 112; that span reads IS.

The protein belongs to the type-II 3-dehydroquinase family. As to quaternary structure, homododecamer.

The enzyme catalyses 3-dehydroquinate = 3-dehydroshikimate + H2O. It participates in metabolic intermediate biosynthesis; chorismate biosynthesis; chorismate from D-erythrose 4-phosphate and phosphoenolpyruvate: step 3/7. In terms of biological role, catalyzes a trans-dehydration via an enolate intermediate. The polypeptide is 3-dehydroquinate dehydratase 1 (aroQ1) (Corynebacterium efficiens (strain DSM 44549 / YS-314 / AJ 12310 / JCM 11189 / NBRC 100395)).